A 190-amino-acid chain; its full sequence is Elongation factor P-like protein (190 aa).

It belongs to the elongation factor P family.

This chain is Elongation factor P-like protein, found in Shigella boydii serotype 4 (strain Sb227).